Reading from the N-terminus, the 168-residue chain is Photosystem I assembly protein Ycf3 (168 aa).

TPR repeat units lie at residues Ala-35–Pro-68, Ser-72–Leu-105, and Gly-120–Asn-153.

Belongs to the Ycf3 family.

It localises to the plastid. It is found in the chloroplast thylakoid membrane. Essential for the assembly of the photosystem I (PSI) complex. May act as a chaperone-like factor to guide the assembly of the PSI subunits. The protein is Photosystem I assembly protein Ycf3 of Phaseolus vulgaris (Kidney bean).